Here is a 520-residue protein sequence, read N- to C-terminus: Bifunctional purine biosynthesis protein PurH (520 aa).

An MGS-like domain is found at 1 to 146 (MAPVALLSVS…KNHADVAVLT (146 aa)).

It belongs to the PurH family.

It carries out the reaction (6R)-10-formyltetrahydrofolate + 5-amino-1-(5-phospho-beta-D-ribosyl)imidazole-4-carboxamide = 5-formamido-1-(5-phospho-D-ribosyl)imidazole-4-carboxamide + (6S)-5,6,7,8-tetrahydrofolate. The enzyme catalyses IMP + H2O = 5-formamido-1-(5-phospho-D-ribosyl)imidazole-4-carboxamide. The protein operates within purine metabolism; IMP biosynthesis via de novo pathway; 5-formamido-1-(5-phospho-D-ribosyl)imidazole-4-carboxamide from 5-amino-1-(5-phospho-D-ribosyl)imidazole-4-carboxamide (10-formyl THF route): step 1/1. Its pathway is purine metabolism; IMP biosynthesis via de novo pathway; IMP from 5-formamido-1-(5-phospho-D-ribosyl)imidazole-4-carboxamide: step 1/1. The protein is Bifunctional purine biosynthesis protein PurH of Synechococcus sp. (strain CC9605).